A 121-amino-acid chain; its full sequence is MTIEQILEAIENMKVLELNELVKAAEEKFGVSASAPVVVGGPVAGAAVEEEQTEFDVVLENAGASKINVIKVVRELTGLGLKEAKEAVDGAPKTLKEGVSKEEAEQIKAKLEEAGAAVTVK.

It belongs to the bacterial ribosomal protein bL12 family. As to quaternary structure, homodimer. Part of the ribosomal stalk of the 50S ribosomal subunit. Forms a multimeric L10(L12)X complex, where L10 forms an elongated spine to which 2 to 4 L12 dimers bind in a sequential fashion. Binds GTP-bound translation factors.

Functionally, forms part of the ribosomal stalk which helps the ribosome interact with GTP-bound translation factors. Is thus essential for accurate translation. In Alkaliphilus oremlandii (strain OhILAs) (Clostridium oremlandii (strain OhILAs)), this protein is Large ribosomal subunit protein bL12.